Consider the following 98-residue polypeptide: ATP-dependent Clp protease adapter protein ClpS (98 aa).

The protein belongs to the ClpS family. As to quaternary structure, binds to the N-terminal domain of the chaperone ClpA.

Functionally, involved in the modulation of the specificity of the ClpAP-mediated ATP-dependent protein degradation. This is ATP-dependent Clp protease adapter protein ClpS from Synechocystis sp. (strain ATCC 27184 / PCC 6803 / Kazusa).